A 59-amino-acid chain; its full sequence is Large ribosomal subunit protein uL30 (59 aa).

Belongs to the universal ribosomal protein uL30 family. In terms of assembly, part of the 50S ribosomal subunit.

This chain is Large ribosomal subunit protein uL30, found in Solibacter usitatus (strain Ellin6076).